We begin with the raw amino-acid sequence, 238 residues long: 2-C-methyl-D-erythritol 4-phosphate cytidylyltransferase (238 aa).

Belongs to the IspD/TarI cytidylyltransferase family. IspD subfamily.

The catalysed reaction is 2-C-methyl-D-erythritol 4-phosphate + CTP + H(+) = 4-CDP-2-C-methyl-D-erythritol + diphosphate. Its pathway is isoprenoid biosynthesis; isopentenyl diphosphate biosynthesis via DXP pathway; isopentenyl diphosphate from 1-deoxy-D-xylulose 5-phosphate: step 2/6. Catalyzes the formation of 4-diphosphocytidyl-2-C-methyl-D-erythritol from CTP and 2-C-methyl-D-erythritol 4-phosphate (MEP). This chain is 2-C-methyl-D-erythritol 4-phosphate cytidylyltransferase, found in Paraburkholderia phytofirmans (strain DSM 17436 / LMG 22146 / PsJN) (Burkholderia phytofirmans).